Consider the following 270-residue polypeptide: uncharacterized protein (270 aa).

A divalent metal cation contacts are provided by aspartate 53, histidine 55, aspartate 83, asparagine 116, histidine 207, and histidine 209.

Belongs to the metallophosphoesterase superfamily. The cofactor is a divalent metal cation.

This is an uncharacterized protein from Bacillus subtilis (strain 168).